Reading from the N-terminus, the 369-residue chain is tRNA/tmRNA (uracil-C(5))-methyltransferase (369 aa).

S-adenosyl-L-methionine contacts are provided by Q190, Y218, N223, E239, and D301. C326 serves as the catalytic Nucleophile. The Proton acceptor role is filled by E360.

Belongs to the class I-like SAM-binding methyltransferase superfamily. RNA M5U methyltransferase family. TrmA subfamily.

It catalyses the reaction uridine(54) in tRNA + S-adenosyl-L-methionine = 5-methyluridine(54) in tRNA + S-adenosyl-L-homocysteine + H(+). The catalysed reaction is uridine(341) in tmRNA + S-adenosyl-L-methionine = 5-methyluridine(341) in tmRNA + S-adenosyl-L-homocysteine + H(+). In terms of biological role, dual-specificity methyltransferase that catalyzes the formation of 5-methyluridine at position 54 (m5U54) in all tRNAs, and that of position 341 (m5U341) in tmRNA (transfer-mRNA). The protein is tRNA/tmRNA (uracil-C(5))-methyltransferase of Vibrio vulnificus (strain CMCP6).